A 224-amino-acid chain; its full sequence is Artemin (224 aa).

The first 39 residues, 1–39 (MELGLGEPTALSHCLRPRWQPALWPTLAALALLSSVTEA), serve as a signal peptide directing secretion. Positions 40–111 (SLDPMSRSPA…AALRGARAAR (72 aa)) are excised as a propeptide. The segment at 41–124 (LDPMSRSPAS…RSSRARATDA (84 aa)) is disordered. The span at 80–95 (RPPPQSPQPAPPPPGP) shows a compositional bias: pro residues. The segment covering 96 to 116 (ALQSPPAALRGARAARAGTRS) has biased composition (low complexity). 3 disulfides stabilise this stretch: Cys-127–Cys-192, Cys-154–Cys-220, and Cys-158–Cys-222. N-linked (GlcNAc...) asparagine glycosylation occurs at Asn-206.

Belongs to the TGF-beta family. GDNF subfamily. As to quaternary structure, homodimer; disulfide-linked. Interacts with GFRA3 coreceptor and RET: forms a 2:2:2 ternary complex composed of ARTN ligand, GFRA3 and RET receptor. In terms of tissue distribution, cochlea. Expressed at higher level in sesorineural epithelium than in the modiolus region or substantia nigra.

Its subcellular location is the secreted. Its function is as follows. Growth factor that supports the survival of sensory and sympathetic peripheral neurons in culture and also supports the survival of dopaminergic neurons of the ventral mid-brain. Acts by binding to its coreceptor, GFRA3, leading to autophosphorylation and activation of the RET receptor. Strong attractant of gut hematopoietic cells thus promoting the formation Peyer's patch-like structures, a major component of the gut-associated lymphoid tissue. The sequence is that of Artemin (Artn) from Rattus norvegicus (Rat).